We begin with the raw amino-acid sequence, 156 residues long: ATP synthase subunit b (156 aa).

A helical transmembrane segment spans residues 7–27 (FFAQMVVFFILWWVVAKFIWP).

Belongs to the ATPase B chain family. In terms of assembly, F-type ATPases have 2 components, F(1) - the catalytic core - and F(0) - the membrane proton channel. F(1) has five subunits: alpha(3), beta(3), gamma(1), delta(1), epsilon(1). F(0) has three main subunits: a(1), b(2) and c(10-14). The alpha and beta chains form an alternating ring which encloses part of the gamma chain. F(1) is attached to F(0) by a central stalk formed by the gamma and epsilon chains, while a peripheral stalk is formed by the delta and b chains.

The protein resides in the cell inner membrane. Its function is as follows. F(1)F(0) ATP synthase produces ATP from ADP in the presence of a proton or sodium gradient. F-type ATPases consist of two structural domains, F(1) containing the extramembraneous catalytic core and F(0) containing the membrane proton channel, linked together by a central stalk and a peripheral stalk. During catalysis, ATP synthesis in the catalytic domain of F(1) is coupled via a rotary mechanism of the central stalk subunits to proton translocation. Functionally, component of the F(0) channel, it forms part of the peripheral stalk, linking F(1) to F(0). The sequence is that of ATP synthase subunit b from Cupriavidus metallidurans (strain ATCC 43123 / DSM 2839 / NBRC 102507 / CH34) (Ralstonia metallidurans).